Here is a 554-residue protein sequence, read N- to C-terminus: MTQLSLFYQFPIQPIFEGHVRNTLICTEEDMQQLQNLGIRKLRKEKEEIQKNKILKNLLKTELDVLQAHVQTECQKLNTNLRDIENALLLENQKIIPSSETHSVLEESLQAKTVTQVTITQIDPAIHFTENFRPEMIKTFYNNTQMWSYTFGAWFYKLKRAFFTDSKLKRMLKLTYVDSLSITQELLSISINALEQITIYPMHDNLVSDLEAGLCLLTAFFASYPGTFLTENIKFVDVIQNLSQIFRYLNTEILATKNASPQDFYFGFNDPDKMKYFIPLCKGRHYAINTFSNHILIKIFIKKGVIKQVPGDQMSKGHVVIESKLTGTLTDDKLLYWTQILLQPKLGKEVPIFVHQQQYLRSGIVAIESLYLLWQILNSESIFGKRTGKFYLTTIFPHVNAEDVTETEFSSVNIQNFEFLMKNYVVPTYLANNESTISTLFPGLISIVVNESVRLGWDHNQNTLTQTNALHSQTKDNPFVEYIRSQLEETAELAVLEKHDKILFHFENGLNVTLSLALPRHRLFAMASSLFNVADLYDFLYFLVLGFIPVATVI.

Positions 1–46 (MTQLSLFYQFPIQPIFEGHVRNTLICTEEDMQQLQNLGIRKLRKEK) are interaction with major capsid protein/MCP.

This sequence belongs to the herpesviridae CVC2 protein family. Heterodimerizes with CVC1. Interacts with major capsid protein/MCP and triplex capsid protein 1/TRX1 at the pentamer vertices. Interacts with the large tegument protein/LTP.

The protein resides in the virion. It is found in the host nucleus. Its function is as follows. Capsid vertex-specific component that plays a role during viral DNA encapsidation, assuring correct genome cleavage and presumably stabilizing capsids that contain full-length viral genomes. Participates in the interaction between the capsid and the tegument through interaction with the large tegument protein/LTP. This Human herpesvirus 7 (strain JI) (HHV-7) protein is Capsid vertex component 2.